A 127-amino-acid chain; its full sequence is Large ribosomal subunit protein bL19 (127 aa).

Belongs to the bacterial ribosomal protein bL19 family.

In terms of biological role, this protein is located at the 30S-50S ribosomal subunit interface and may play a role in the structure and function of the aminoacyl-tRNA binding site. This chain is Large ribosomal subunit protein bL19, found in Ruegeria pomeroyi (strain ATCC 700808 / DSM 15171 / DSS-3) (Silicibacter pomeroyi).